Here is a 370-residue protein sequence, read N- to C-terminus: Queuine tRNA-ribosyltransferase (370 aa).

Asp89 functions as the Proton acceptor in the catalytic mechanism. Substrate-binding positions include 89–93 (DSGGF), Asp143, Gln185, and Gly212. Residues 243 to 249 (GVGKPED) form an RNA binding region. Asp262 serves as the catalytic Nucleophile. The segment at 267-271 (TRNAR) is RNA binding; important for wobble base 34 recognition. Zn(2+)-binding residues include Cys300, Cys302, Cys305, and His331.

The protein belongs to the queuine tRNA-ribosyltransferase family. As to quaternary structure, homodimer. Within each dimer, one monomer is responsible for RNA recognition and catalysis, while the other monomer binds to the replacement base PreQ1. Zn(2+) serves as cofactor.

It carries out the reaction 7-aminomethyl-7-carbaguanine + guanosine(34) in tRNA = 7-aminomethyl-7-carbaguanosine(34) in tRNA + guanine. The protein operates within tRNA modification; tRNA-queuosine biosynthesis. Its function is as follows. Catalyzes the base-exchange of a guanine (G) residue with the queuine precursor 7-aminomethyl-7-deazaguanine (PreQ1) at position 34 (anticodon wobble position) in tRNAs with GU(N) anticodons (tRNA-Asp, -Asn, -His and -Tyr). Catalysis occurs through a double-displacement mechanism. The nucleophile active site attacks the C1' of nucleotide 34 to detach the guanine base from the RNA, forming a covalent enzyme-RNA intermediate. The proton acceptor active site deprotonates the incoming PreQ1, allowing a nucleophilic attack on the C1' of the ribose to form the product. After dissociation, two additional enzymatic reactions on the tRNA convert PreQ1 to queuine (Q), resulting in the hypermodified nucleoside queuosine (7-(((4,5-cis-dihydroxy-2-cyclopenten-1-yl)amino)methyl)-7-deazaguanosine). This Pseudoalteromonas atlantica (strain T6c / ATCC BAA-1087) protein is Queuine tRNA-ribosyltransferase.